The sequence spans 413 residues: Multifunctional CCA protein (413 aa).

The ATP site is built by Gly8 and Arg11. Residues Gly8 and Arg11 each contribute to the CTP site. Mg(2+) contacts are provided by Asp21 and Asp23. ATP is bound by residues Arg91, Arg137, and Arg140. CTP-binding residues include Arg91, Arg137, and Arg140. The HD domain occupies 228–329; that stretch reads TGIHTLMTLS…VKLFDSIDAW (102 aa).

It belongs to the tRNA nucleotidyltransferase/poly(A) polymerase family. Bacterial CCA-adding enzyme type 1 subfamily. As to quaternary structure, monomer. Can also form homodimers and oligomers. The cofactor is Mg(2+). Ni(2+) is required as a cofactor.

The enzyme catalyses a tRNA precursor + 2 CTP + ATP = a tRNA with a 3' CCA end + 3 diphosphate. It catalyses the reaction a tRNA with a 3' CCA end + 2 CTP + ATP = a tRNA with a 3' CCACCA end + 3 diphosphate. Catalyzes the addition and repair of the essential 3'-terminal CCA sequence in tRNAs without using a nucleic acid template. Adds these three nucleotides in the order of C, C, and A to the tRNA nucleotide-73, using CTP and ATP as substrates and producing inorganic pyrophosphate. tRNA 3'-terminal CCA addition is required both for tRNA processing and repair. Also involved in tRNA surveillance by mediating tandem CCA addition to generate a CCACCA at the 3' terminus of unstable tRNAs. While stable tRNAs receive only 3'-terminal CCA, unstable tRNAs are marked with CCACCA and rapidly degraded. In Citrobacter koseri (strain ATCC BAA-895 / CDC 4225-83 / SGSC4696), this protein is Multifunctional CCA protein.